The chain runs to 342 residues: [Citrate [pro-3S]-lyase] ligase (342 aa).

The region spanning 1–127 is the N-acetyltransferase domain; that stretch reads MTLILKRVQL…RAVLMENSRE (127 aa).

It catalyses the reaction holo-[citrate lyase ACP] + acetate + ATP = acetyl-[citrate lyase ACP] + AMP + diphosphate. Functionally, acetylation of prosthetic group (2-(5''-phosphoribosyl)-3'-dephosphocoenzyme-A) of the gamma subunit of citrate lyase. In Klebsiella pneumoniae, this protein is [Citrate [pro-3S]-lyase] ligase (citC).